Consider the following 98-residue polypeptide: MSAIDREQVAHLAELARIEMTDEELARVAGELELIVSSVASVSQAAGPDVPATSHPLPLQNVFREDVVGEMLTQEEALLNAPDSQDGKFRVPAILDGE.

The protein belongs to the GatC family. In terms of assembly, heterotrimer of A, B and C subunits.

It catalyses the reaction L-glutamyl-tRNA(Gln) + L-glutamine + ATP + H2O = L-glutaminyl-tRNA(Gln) + L-glutamate + ADP + phosphate + H(+). The enzyme catalyses L-aspartyl-tRNA(Asn) + L-glutamine + ATP + H2O = L-asparaginyl-tRNA(Asn) + L-glutamate + ADP + phosphate + 2 H(+). Its function is as follows. Allows the formation of correctly charged Asn-tRNA(Asn) or Gln-tRNA(Gln) through the transamidation of misacylated Asp-tRNA(Asn) or Glu-tRNA(Gln) in organisms which lack either or both of asparaginyl-tRNA or glutaminyl-tRNA synthetases. The reaction takes place in the presence of glutamine and ATP through an activated phospho-Asp-tRNA(Asn) or phospho-Glu-tRNA(Gln). The sequence is that of Aspartyl/glutamyl-tRNA(Asn/Gln) amidotransferase subunit C from Kocuria rhizophila (strain ATCC 9341 / DSM 348 / NBRC 103217 / DC2201).